A 1340-amino-acid chain; its full sequence is TSET complex member tstE (1340 aa).

Residues 56–67 (NQSQTSPNSNDG) are compositionally biased toward low complexity. Disordered regions lie at residues 56-75 (NQSQ…GSGG) and 110-131 (SGSG…GGGQ). WD repeat units lie at residues 208 to 246 (VNQI…VIGK), 250 to 294 (DPTE…LQTI), 345 to 384 (GHKK…SFLN), and 397 to 436 (IEHS…NPQE). The span at 1216–1251 (KSHMSSTTTLRRSPSIENIRTTSTTFDSSKFNTDNQ) shows a compositional bias: polar residues. The disordered stretch occupies residues 1216–1340 (KSHMSSTTTL…TPTPTTTLSS (125 aa)). Residues 1252-1275 (ELFDDDSDDDSDSGADADVDSENE) are compositionally biased toward acidic residues. Residues 1286–1318 (ASLQHNDNSSLTNITVTDNDSNLDQDITSNTGS) show a composition bias toward polar residues. Positions 1328–1340 (LSSTPTPTTTLSS) are enriched in low complexity.

Component of the TSET complex, a heterohexamer composed of tstA, tstB, tstC, tstD, tstE and tstF, which may act in plasma membrane turnover. tstA, tstB, tstC and tstD are likely to be the core complex members with tstE and tstF acting as associated scaffold proteins.

The protein is TSET complex member tstE of Dictyostelium discoideum (Social amoeba).